A 109-amino-acid polypeptide reads, in one-letter code: Spermidine export protein MdtI (109 aa).

The next 4 helical transmembrane spans lie at 6 to 26, 36 to 56, 64 to 84, and 88 to 108; these read WIHG…NVLL, CYGI…SQAV, AYAL…WVLF, and LNPK…MIKF.

This sequence belongs to the drug/metabolite transporter (DMT) superfamily. Small multidrug resistance (SMR) (TC 2.A.7.1) family. MdtI subfamily. Forms a complex with MdtJ.

The protein localises to the cell inner membrane. Functionally, catalyzes the excretion of spermidine. This chain is Spermidine export protein MdtI, found in Salmonella paratyphi A (strain ATCC 9150 / SARB42).